Here is a 937-residue protein sequence, read N- to C-terminus: MISAPDVVAFTKEEEYEEEPYNEPALPEEYSVPLFPFASQGANPWSKLSGAKFSRDFILISEFSEQVGPQPLLTIPNDTKVFGTFDLNYFSLRIMSVDYQASFVGHPPGSAYPKLNFVEDSKVVLGDSKEGAFAYVHHLTLYDLEARGFVRPFCMAYISADQHKIMQQFQELSAEFSRASECLKTGNRKAFAGELEKKLKDLDYTRTVLHTETEIQKKANDKGFYSSQAIEKANELASVEKSIIEHQDLLKQIRSYPHRKLKGHDLCPGEMEHIQDQASQASTTSNPDESADTDLYTCRPAYTPKLIKAKSTKCFDKKLKTLEELCDTEYFTQTLAQLSHIEHMFRGDLCYLLTSQIDRALLKQQHITNFLFEDFVEVDDRMVEKQESIPSKPSQDRPPSSSLEECPIPKVLISVGSYKSSVESVLIKMEQELGDEEYKEVEVTELSSFDPQENLDYLDMDMKGSISSGESIEVLGTEKSTSVLSKSDSQASLTVPLSPQVVRSKAVSHRTISEDSIEVLSTCPSEALIPDDFKASYPSAINEEESYPDGNEGAIRFQASISPPELGETEEGSIENTPSQIDSSCCIGKESDGQLVLPSTPAHTHSDEDGVVSSPPQRHRQKDQGFRVDFSVENANPSSRDNSCEGFPAYELDPSHLLASRDISKTSLDNYSDTTSYVSSVASTSSDRIPSAYPAGLSSDRHKKRAGQNALKFIRQYPFAHPAIYSLLSGRTLVVLGEDEAIVRKLVTALAIFVPSYGCYAKPVKHWASSPLHIMDFQKWKLIGLQRVASPAGAGTLHALSRYSRYTSILDLDNKTLRCPLYRGTLVPRLADHRTQIKRGSTYYLHVQSMLTQLCSKAFLYTFCHHLHLPTHDKETEELVASRQMSFLKLTLGLVNEDVRVVQYLAELLKLHYMQESPGTSHPMLRFDYVPSFLYKI.

Residues M1–L349 form a required for the homodimerization of the C9orf72-SMCR8 complex region. A uDENN FLCN/SMCR8-type domain is found at L48–N220. 2 disordered regions span residues I274–T293 and E384–E405. 2 stretches are compositionally biased toward polar residues: residues D276–D288 and S388–L403. The region spanning K318 to T835 is the cDENN FLCN/SMCR8-type domain. At S402 the chain carries Phosphoserine; by TBK1. Phosphoserine occurs at positions 417, 468, 471, 489, 492, and 498. Residues P564–E645 are disordered. A compositionally biased stretch (polar residues) spans I574–S583. S790 is subject to Phosphoserine. Phosphothreonine; by TBK1 is present on T796. In terms of domain architecture, dDENN FLCN/SMCR8-type spans Y844–K910. The tract at residues T862 to M914 is interacts with WDR41 within the C9orf72-SMCR8 complex.

It belongs to the SMCR8 family. As to quaternary structure, component of the C9orf72-SMCR8 complex, at least composed of C9orf72, SMCR8 and WDR41. The complex is formed of two protomers, each individually consisting of one molecule each of C9orf72, SMCR8 and WDR41. The protomers homodimerize via an interaction between C9orf72 (via C-terminus) and SMCR8 (via N-terminus). Within each protomer SMCR8 (via DENN domain) acts as a bridging protein between WDR41 (via C-terminus and N-terminus) and C9orf72 (via C-terminus). The C9orf72-SMCR8 complex associates with the ULK1/ATG1 kinase complex. Interacts with C9orf72; the interaction is direct. Interacts with DLG4/PSD-95. In terms of processing, phosphorylation by TBK1 is required to promote autophagosome maturation. Phosphorylated by ULK1. Expressed in all tissues tested.

Its subcellular location is the cytoplasm. The protein localises to the nucleus. It localises to the presynapse. It is found in the postsynapse. Its function is as follows. Component of the C9orf72-SMCR8 complex, a complex that has guanine nucleotide exchange factor (GEF) activity and regulates autophagy. In the complex, C9orf72 and SMCR8 probably constitute the catalytic subunits that promote the exchange of GDP to GTP, converting inactive GDP-bound RAB8A and RAB39B into their active GTP-bound form, thereby promoting autophagosome maturation. The C9orf72-SMCR8 complex also acts as a negative regulator of autophagy initiation by interacting with the ULK1/ATG1 kinase complex and inhibiting its protein kinase activity. As part of the C9orf72-SMCR8 complex, stimulates RAB8A and RAB11A GTPase activity in vitro. Acts as a regulator of mTORC1 signaling by promoting phosphorylation of mTORC1 substrates. In addition to its activity in the cytoplasm within the C9orf72-SMCR8 complex, SMCR8 also localizes in the nucleus, where it associates with chromatin and negatively regulates expression of suppresses ULK1 and WIPI2 genes. This is Guanine nucleotide exchange protein SMCR8 from Homo sapiens (Human).